Reading from the N-terminus, the 674-residue chain is MRKILVTNALPYANGDLHLGHMLGYIQSDIWVRFQKLQGNQCIFICGSDTHGTPIMLKAKSLGITPEELVTKYSNRHLQDFTDFEINFDNYHSTHNSLNKEIVEDIYNKLNNKNLISKKAIAQAYDPEAKMFLPDRFVKGTCPKCKAEDQYGDSCEVCGATYDPTELINPRSVISGQSPIQKNSEHFFFDLPALEKNIKDWIESNTLLQPEVANKLAEWFEQGLQSWDISRDAPYFGFAIPGTNEQKFFYVWLDAPMGYIASFKDYCNKNNINFGDFWGDSSSESELYHFIGKDIIYFHALFWPAILSSTGYKTPTSVFANGFLTVNGKKMSKSRGTFIQARTYLDNLEPSYLRYYFASRLTSRIDDIDLNLEEFVTKSNSDIVGKVVNIASRCAGFIYKKFDATLSGEIFDPELESEFSKNHDAITQAFEKREFAHAVRLIMALADKANQFIDYHKPWQLAKEEGQEQKVHQVCSQGINMFKVLIAYLKPIIPSIVAEAERFLNIQFISWADAPKFLINHKIDKFKPLATRIEKEKVDKILEDTKKMFENEQAPQSKKEEPKLDIAAECTFDDFMKVDLRIAKITEASHVEGADKLLKLILDLGGVTKQVFAGIKSAYKPEDLIGKHTIMVANLAPRKMKFGMSEGMVLAAGDGKGIYILEPHEGAQPGMRVK.

Residues P11 to H21 carry the 'HIGH' region motif. Residues C142, C145, C155, and C158 each contribute to the Zn(2+) site. The 'KMSKS' region motif lies at K330–S334. Position 333 (K333) interacts with ATP. Residues D574 to K674 enclose the tRNA-binding domain.

Belongs to the class-I aminoacyl-tRNA synthetase family. MetG type 1 subfamily. In terms of assembly, homodimer. Requires Zn(2+) as cofactor.

Its subcellular location is the cytoplasm. It carries out the reaction tRNA(Met) + L-methionine + ATP = L-methionyl-tRNA(Met) + AMP + diphosphate. Its function is as follows. Is required not only for elongation of protein synthesis but also for the initiation of all mRNA translation through initiator tRNA(fMet) aminoacylation. The chain is Methionine--tRNA ligase from Francisella tularensis subsp. holarctica (strain OSU18).